The primary structure comprises 66 residues: uncharacterized protein (66 aa).

The hydrophobic stretch occupies residues 1 to 20 (MIALAYLATVAIAAMVLAVA).

This is an uncharacterized protein from Streptomyces lividans.